The following is a 153-amino-acid chain: 6,7-dimethyl-8-ribityllumazine synthase (153 aa).

5-amino-6-(D-ribitylamino)uracil is bound by residues Phe21, 55–57 (AFE), and 79–81 (TVI). 84–85 (AT) contacts (2S)-2-hydroxy-3-oxobutyl phosphate. Residue His87 is the Proton donor of the active site. Phe112 lines the 5-amino-6-(D-ribitylamino)uracil pocket. Position 126 (Arg126) interacts with (2S)-2-hydroxy-3-oxobutyl phosphate.

It belongs to the DMRL synthase family. As to quaternary structure, forms an icosahedral capsid composed of 60 subunits, arranged as a dodecamer of pentamers.

It catalyses the reaction (2S)-2-hydroxy-3-oxobutyl phosphate + 5-amino-6-(D-ribitylamino)uracil = 6,7-dimethyl-8-(1-D-ribityl)lumazine + phosphate + 2 H2O + H(+). The protein operates within cofactor biosynthesis; riboflavin biosynthesis; riboflavin from 2-hydroxy-3-oxobutyl phosphate and 5-amino-6-(D-ribitylamino)uracil: step 1/2. Its function is as follows. Catalyzes the formation of 6,7-dimethyl-8-ribityllumazine by condensation of 5-amino-6-(D-ribitylamino)uracil with 3,4-dihydroxy-2-butanone 4-phosphate. This is the penultimate step in the biosynthesis of riboflavin. This is 6,7-dimethyl-8-ribityllumazine synthase from Bacillus cereus (strain B4264).